The sequence spans 147 residues: Putative protein adenylyltransferase MJ1305 (147 aa).

A GSX(10)DXD motif motif is present at residues Gly32–Asp46. The Mg(2+) site is built by Asp44 and Asp46.

It belongs to the MntA antitoxin family. Requires Mg(2+) as cofactor.

It catalyses the reaction L-tyrosyl-[protein] + ATP = O-(5'-adenylyl)-L-tyrosyl-[protein] + diphosphate. The enzyme catalyses O-(5'-adenylyl)-L-tyrosyl-[protein] + ATP = O-[5'-(adenylyl-(5'-&gt;3')-adenylyl)]-L-tyrosyl-[protein] + diphosphate. In terms of biological role, putative antitoxin component of a putative type VII toxin-antitoxin (TA) system. Its cognate toxin might be MJ1304, which it might AMPylate. The chain is Putative protein adenylyltransferase MJ1305 from Methanocaldococcus jannaschii (strain ATCC 43067 / DSM 2661 / JAL-1 / JCM 10045 / NBRC 100440) (Methanococcus jannaschii).